The sequence spans 421 residues: 4-hydroxy-3-methylbut-2-en-1-yl diphosphate synthase (flavodoxin) (421 aa).

[4Fe-4S] cluster is bound by residues Cys311, Cys314, Cys357, and Glu364.

The protein belongs to the IspG family. The cofactor is [4Fe-4S] cluster.

It catalyses the reaction (2E)-4-hydroxy-3-methylbut-2-enyl diphosphate + oxidized [flavodoxin] + H2O + 2 H(+) = 2-C-methyl-D-erythritol 2,4-cyclic diphosphate + reduced [flavodoxin]. It participates in isoprenoid biosynthesis; isopentenyl diphosphate biosynthesis via DXP pathway; isopentenyl diphosphate from 1-deoxy-D-xylulose 5-phosphate: step 5/6. Converts 2C-methyl-D-erythritol 2,4-cyclodiphosphate (ME-2,4cPP) into 1-hydroxy-2-methyl-2-(E)-butenyl 4-diphosphate. This Xanthomonas campestris pv. campestris (strain 8004) protein is 4-hydroxy-3-methylbut-2-en-1-yl diphosphate synthase (flavodoxin).